We begin with the raw amino-acid sequence, 204 residues long: UPF0056 membrane protein CT_852 (204 aa).

Helical transmembrane passes span 9–29 (TLLF…IALL), 39–59 (HIIL…VTFG), 66–86 (LGII…SIAI), 107–127 (IFFP…STLG), 138–158 (IVLG…LLSS), and 176–196 (FGIS…STAF).

It belongs to the UPF0056 (MarC) family.

The protein localises to the cell membrane. In Chlamydia trachomatis serovar D (strain ATCC VR-885 / DSM 19411 / UW-3/Cx), this protein is UPF0056 membrane protein CT_852.